Consider the following 171-residue polypeptide: Protein TIFY 11d (171 aa).

The Tify domain maps to 65–100; that stretch reads PSAGTAPLTIFYDGRMVVVDDVPVEKAAELMRLAGS. Positions 117-142 match the Jas motif; it reads PIARKASLQRFLQKRKHRITTTSEPY. The Nuclear localization signal signature appears at 119–126; sequence ARKASLQR.

This sequence belongs to the TIFY/JAZ family. Interacts with BHLH148 and COI1A. Interacts with COI1A, COI1B and COI2 in a coronatine-dependent manner. Coronatine is an analog of jasmonoyl isoleucine (JA-Ile). Post-translationally, ubiquitinated. Increase in jasmonoyl isoleucine (JA-Ile) levels mediates its degradation via COI1A-mediated proteasome pathway.

It localises to the nucleus. Its function is as follows. Repressor of jasmonate (JA) responses. May act on an initial response of JA-regulated gene expression toward drought tolerance as part of a BHLH148-TIFY11D/JAZ12-COI1A complex. In Oryza sativa subsp. japonica (Rice), this protein is Protein TIFY 11d.